The following is a 249-amino-acid chain: 3-deoxy-manno-octulosonate cytidylyltransferase (249 aa).

Belongs to the KdsB family.

The protein localises to the cytoplasm. It carries out the reaction 3-deoxy-alpha-D-manno-oct-2-ulosonate + CTP = CMP-3-deoxy-beta-D-manno-octulosonate + diphosphate. It functions in the pathway nucleotide-sugar biosynthesis; CMP-3-deoxy-D-manno-octulosonate biosynthesis; CMP-3-deoxy-D-manno-octulosonate from 3-deoxy-D-manno-octulosonate and CTP: step 1/1. Its pathway is bacterial outer membrane biogenesis; lipopolysaccharide biosynthesis. Its function is as follows. Activates KDO (a required 8-carbon sugar) for incorporation into bacterial lipopolysaccharide in Gram-negative bacteria. This Aliivibrio salmonicida (strain LFI1238) (Vibrio salmonicida (strain LFI1238)) protein is 3-deoxy-manno-octulosonate cytidylyltransferase.